Consider the following 432-residue polypeptide: Adenylosuccinate synthetase (432 aa).

GTP contacts are provided by residues Gly13–Lys19 and Gly41–Thr43. Asp14 functions as the Proton acceptor in the catalytic mechanism. 2 residues coordinate Mg(2+): Asp14 and Gly41. IMP is bound by residues Asp14–Lys17, Asn39–His42, Thr130, Arg144, Gln225, Thr240, and Arg304. His42 acts as the Proton donor in catalysis. Ala300–Arg306 contacts substrate. GTP-binding positions include Arg306, Lys332–Asp334, and Ser415–Gly417.

This sequence belongs to the adenylosuccinate synthetase family. Homodimer. Mg(2+) is required as a cofactor.

The protein resides in the cytoplasm. It carries out the reaction IMP + L-aspartate + GTP = N(6)-(1,2-dicarboxyethyl)-AMP + GDP + phosphate + 2 H(+). It participates in purine metabolism; AMP biosynthesis via de novo pathway; AMP from IMP: step 1/2. Its function is as follows. Plays an important role in the de novo pathway of purine nucleotide biosynthesis. Catalyzes the first committed step in the biosynthesis of AMP from IMP. The sequence is that of Adenylosuccinate synthetase from Cronobacter sakazakii (strain ATCC BAA-894) (Enterobacter sakazakii).